The chain runs to 179 residues: Phospholipase A2 (179 aa).

The N-terminal stretch at 1–21 (MHALRSSVLALWLCLHVSVRA) is a signal peptide. A propeptide spanning residues 22-39 (WMTYRSANGLDEYEPEDR) is cleaved from the precursor. The Ca(2+) site is built by Trp-47, Gly-49, and Gly-51. 5 cysteine pairs are disulfide-bonded: Cys-48–Cys-70, Cys-69–Cys-109, Cys-76–Cys-102, Cys-100–Cys-133, and Cys-142–Cys-150. His-73 is an active-site residue. Residue Asp-74 participates in Ca(2+) binding. Residue Asp-103 is part of the active site.

This sequence belongs to the phospholipase A2 family. Group III subfamily. It depends on Ca(2+) as a cofactor. As to expression, expressed by the venom gland.

The protein resides in the secreted. It carries out the reaction a 1,2-diacyl-sn-glycero-3-phosphocholine + H2O = a 1-acyl-sn-glycero-3-phosphocholine + a fatty acid + H(+). Its function is as follows. May potentiate Xylotoxin(1)-Xa1a DRG activation and cell lysis, since the orthologous A.mellifera PA2 potentiates Xylotoxin(1)-Xa1a DRG activation and cell lysis. In vivo, intraplantar injection in mice may potentiate spontaneous pain behaviors and paw swelling caused by Xylotoxin(1)-Xa1a, since the orthologous A.mellifera PA2 shows this effect. PLA2 catalyzes the calcium-dependent hydrolysis of the 2-acyl groups in 3-sn-phosphoglycerides. In Xylocopa aruana (Great carpenter bee), this protein is Phospholipase A2.